A 1651-amino-acid chain; its full sequence is MKSIGIFVVALWLTHFCDGGQLGARIYSSGSESSVLLFDQYINKYAFTNGDVKIIYEGKSIFEILSETYVTDFNIFDRAISQDNLDMFQIVQFPLAGQAIVMTYNLPELVNSSYRLVIDRETLGKIWYGAISKWNDTAIQNLNPTVGHLLPDTDIILGYSDDYIMTISGLIKMALSSFSPEFDTELKYANNTFNGMNPTKNGRGHNIGETSTVRLEWLKKTSYGLTYINYADVYNNGTDSTVPMNMYNKAGYFVEPNLVSVQAAMSDFKIFYANNNSTIDIYDAPGNKSWPLAYVNYLGCSSAFGPMADCTRTIQMTNFIAWIYTNDAASESAIELQFYPLDKTLQKVAIDNLYNIKCNNIAVLSQQYLIGFGAPISVMSLWPNSWTTVASTARYYSAPSSQALELQETYGADFGITVTGVPNTYFNKMPDLGVMPLAAFTIVPAYNIPAINGTNGTLILDYEIITDIYLGIINNWNDSRIRALNGIEINRKLPNVSITVIYQAVSSDYNFMFTDFMSKKSPKFAKKIGSTYFPILTLPNNSMIITTDIYDVGNQLISNSNSFAFWPYFGITMLSRQPTVQAASIRTEKGNIISSNSTTLEKAINNFISKGGSIEDAPYIMGENDESWPLSALMTMIYRQSTIHYAAKAAAVADFAYWTQSNPTAINIATIQGMYVASNNPTLKSRNLNLLKNFVVDGEPISSIANCIYQGTICSDMGTCNNNSCLCNSYRKGIYCENIVSSSGESIGIILAIVIPVSFVICCIIIVLVIALIVSIRLHQRVEDEWEVDFHELDFMESLGSGGSGEVFKAMWKGTEVAVKKLVNSNITKDAERNFKQEIHRMTSLRHPNVVLFMAASTRPPNMCIVMEFMSLGSLYDLLGNELVTEIPPVLRIRIAYQAAKGMHFLHSSDIVHRDLKSLNLLLDSKWNVKVSDFGLTKIKDNNKGKSSTKEDSVCSIQWTAPEVLSEKQDIDYILADVYSFGIIMWELMTRLRPYIGLSPAAIAVAVIRDNLRPEIQEEDINLMSSDYVELVNICWHKDTMIRPSFLEIMTKLSTLIGGSGITTGTSTSSSNQSSDYIGPNIITRTKNIHNNDETKNSFGSTTYGSNTISSSSNTESDKILSKLNKKKIPTGEVIIVFTDIISAEQLWHHNPLAMKNATVLYNAVIRETLDKIGGYESFIYKDHNSGEGSFCLVFQEAIDAIDFCSISQKKLLEIDWPEELLDHPAAASEKDINGTMIFAGPRVRMGLHAGTVKIMQDPVTRRYEYSGVTVNIAAKITMMTHGGQVIMSEQVTDKISNNDCSNIKSLGQIEITDTNNYKVNIFELRIEGLIGRFFGGVAFYNYDSVTESTDLDDTYPDSLNFSTNGILYGGIKQENEYLSSAGLCRWIINYDDIQIGKQIGVGSYGIVNMGKWKNINVAVKKFVKQKIDEKQMLEFRAEIAFLSQLRHPHIILMIGACLKRPNICIVTEFMGNGSLRNVIKTTKPEWKLKIKMLYQTALGIGYLHNSDPIIIHRDIKPSNILVDDSMNVKIADFGFARIKEENSVMTRCGTPCWTAPEIIRGEKYTEKVDVFSFGIVMWEVLTCKEPFSGCNFMKVSMDILEGARPQIPSDCPIDFTKLMKQCWHAKPDKRPSMEDVIMGLNDMLGPEKSL.

An N-terminal signal peptide occupies residues 1–19; sequence MKSIGIFVVALWLTHFCDG. 14 N-linked (GlcNAc...) asparagine; by host glycosylation sites follow: Asn-111, Asn-135, Asn-190, Asn-236, Asn-275, Asn-276, Asn-287, Asn-452, Asn-455, Asn-477, Asn-495, Asn-540, Asn-596, and Asn-722. Residues 749–769 form a helical membrane-spanning segment; the sequence is IILAIVIPVSFVICCIIIVLV. The region spanning 793–1057 is the Protein kinase 1 domain; the sequence is LDFMESLGSG…EIMTKLSTLI (265 aa). ATP-binding positions include 799 to 807 and Lys-820; that span reads LGSGGSGEV. The Proton acceptor role is filled by Asp-915. The tract at residues 1089–1115 is disordered; that stretch reads IHNNDETKNSFGSTTYGSNTISSSSNT. Over residues 1100-1115 the composition is skewed to low complexity; sequence GSTTYGSNTISSSSNT. Residues 1135–1278 enclose the Guanylate cyclase domain; sequence IIVFTDIISA…VTVNIAAKIT (144 aa). One can recognise a Protein kinase 2 domain in the interval 1394 to 1645; the sequence is IQIGKQIGVG…DVIMGLNDML (252 aa). ATP is bound by residues 1400–1408 and Lys-1421; that span reads IGVGSYGIV. The Proton acceptor role is filled by Asp-1515.

It is found in the membrane. The enzyme catalyses L-seryl-[protein] + ATP = O-phospho-L-seryl-[protein] + ADP + H(+). It carries out the reaction L-threonyl-[protein] + ATP = O-phospho-L-threonyl-[protein] + ADP + H(+). This chain is Putative serine/threonine-protein kinase/receptor R818, found in Acanthamoeba polyphaga mimivirus (APMV).